We begin with the raw amino-acid sequence, 267 residues long: uncharacterized protein (267 aa).

The stretch at 37-62 forms a coiled coil; that stretch reads DSSNNYKKKYKKYKRKYIDLKKQLNY.

This is an uncharacterized protein from Acanthamoeba polyphaga (Amoeba).